The following is a 210-amino-acid chain: Glutathione S-transferase mdpJ (210 aa).

A GST N-terminal domain is found at 2–83 (SFGTLYTHNP…YCNDERSSLR (82 aa)). Positions 77 to 200 (DERSSLRILQ…VAGGVPDLGL (124 aa)) constitute a GST C-terminal domain.

It belongs to the GST superfamily.

Its pathway is secondary metabolite biosynthesis. Glutathione S-transferase; part of the gene cluster that mediates the biosynthesis of monodictyphenone, a prenyl xanthone derivative. The pathway begins with the synthesis of atrochrysone thioester by the polyketide synthase (PKS) mdpG. The atrochrysone carboxyl ACP thioesterase mdpF then breaks the thioester bond and releases the atrochrysone carboxylic acid from mdpG. The atrochrysone carboxylic acid is then converted to atrochrysone which is further transformed into emodin anthrone. The next step is performed by the anthrone oxygenase mdpH that catalyzes the oxidation of emodinanthrone to emodin. Emodin is further modified to yield monodictyphenone via several steps involving mdpB, mdpC mdpJ, mdpK and mdpL. These enzymes with xptA, xptB and xptC are also proposed to be involved in the synthesis of shamixanthone from emodin. Especially, direct reduction of emodin by the short chain dehydrogenase mdpC followed by dehydration catalyzed by the scytalone dehydratase-like protein mdpB gives loss of oxygen and formation of chrysophanol intermediate in two simple steps. This Emericella nidulans (strain FGSC A4 / ATCC 38163 / CBS 112.46 / NRRL 194 / M139) (Aspergillus nidulans) protein is Glutathione S-transferase mdpJ.